Here is a 163-residue protein sequence, read N- to C-terminus: Nucleotide-binding protein MAV_4575 (163 aa).

The protein belongs to the YajQ family.

Nucleotide-binding protein. This is Nucleotide-binding protein MAV_4575 from Mycobacterium avium (strain 104).